A 370-amino-acid polypeptide reads, in one-letter code: Translocating chain-associated membrane protein 2 (370 aa).

Residues 1 to 22 lie on the Cytoplasmic side of the membrane; it reads MAFRRRTKSYPLFSQEFIIHNH. A helical transmembrane segment spans residues 23–43; that stretch reads ADIGFCLVLCVLIGLMFEVTA. Residues 44–75 are Extracellular-facing; it reads KTAFLFILPQYNISVPTADSETVHYHYGPKDL. A glycan (N-linked (GlcNAc...) asparagine) is linked at asparagine 55. A helical transmembrane segment spans residues 76–96; sequence VTILFYVVITIIFHAVVQEYI. Topologically, residues 97–119 are cytoplasmic; sequence LDKISKRLHLSKVKHSKFNESGQ. The TLC domain maps to 112–321; sequence SKFNESGQLL…HSQLRHWREY (210 aa). A helical membrane pass occupies residues 120 to 140; that stretch reads LLVFHLSAVAWCFYVIVTEGY. Residues 141-159 are Extracellular-facing; that stretch reads LTNPRSLWEDYPHVYLSFQ. Residues 160–180 traverse the membrane as a helical segment; the sequence is VKFFYLGQLAYWLHSLPELYF. Topologically, residues 181-191 are cytoplasmic; that stretch reads QKVRKEEVPRQ. A helical transmembrane segment spans residues 192–209; that stretch reads LQYICLYLLHITGAYLLN. Residues 210–214 lie on the Extracellular side of the membrane; that stretch reads LSRLG. The chain crosses the membrane as a helical span at residues 215–235; sequence LILLLLQYSTEALFHMARLFH. Residues 236-250 lie on the Cytoplasmic side of the membrane; sequence FADENNERLFNAWAA. The helical transmembrane segment at 251-271 threads the bilayer; that stretch reads VFGVTRLFILTLAVLTIGFGL. At 272 to 287 the chain is on the extracellular side; it reads ARVENQVFDPEKGNFN. A helical transmembrane segment spans residues 288 to 308; sequence TLPCRLGMLLLVCVAQAWLMW. The Cytoplasmic portion of the chain corresponds to 309 to 370; it reads RFIHSQLRHW…SSRTKKLKSP (62 aa). The disordered stretch occupies residues 332-370; sequence SAVPRPPAKLLKREPGYHENGVVKAENGTSSRTKKLKSP.

Belongs to the TRAM family. As to quaternary structure, interacts with COL1A1. Interacts with SERCA2B.

It is found in the membrane. Functionally, necessary for collagen type I synthesis. May couple the activity of the ER Ca(2+) pump SERCA2B with the activity of the translocon. This coupling may increase the local Ca(2+) concentration at the site of collagen synthesis, and a high Ca(2+) concentration may be necessary for the function of molecular chaperones involved in collagen folding. Required for proper insertion of the first transmembrane helix N-terminus of TM4SF20 into the ER lumen, may act as a ceramide sensor for regulated alternative translocation (RAT). The protein is Translocating chain-associated membrane protein 2 (Tram2) of Mus musculus (Mouse).